A 65-amino-acid chain; its full sequence is Defensin-B2 (65 aa).

The signal sequence occupies residues 1–23 (MEARVLLLCAVLFLLVHTPPAAG). 3 disulfides stabilise this stretch: cysteine 29-cysteine 56, cysteine 36-cysteine 50, and cysteine 40-cysteine 57.

The protein belongs to the beta-defensin family. In terms of tissue distribution, lowly expressed in spleen, and lung.

It localises to the secreted. Its function is as follows. Has antimicrobial activity. This is Defensin-B2 from Ornithorhynchus anatinus (Duckbill platypus).